A 971-amino-acid polypeptide reads, in one-letter code: Reversion-inducing cysteine-rich protein with Kazal motifs (971 aa).

An N-terminal signal peptide occupies residues M1 to A22. The Knot 1 repeat unit spans residues C37–C84. Residues C37–C338 are 5 X Knot repeats. Residues N39 and N86 are each glycosylated (N-linked (GlcNAc...) asparagine). Knot repeat units follow at residues C104 to C141 and C151 to C197. N200 is a glycosylation site (N-linked (GlcNAc...) asparagine). Knot repeat units lie at residues C216 to C263 and C292 to C338. N297 and N352 each carry an N-linked (GlcNAc...) asparagine glycan. Kazal-like domains lie at T627 to S673, T698 to P752, and F753 to A789. Cystine bridges form between C633/C658, C635/C654, C643/C671, C716/C735, C724/C750, and C761/C787. Residue S942 is the site of GPI-anchor amidated serine attachment. Residues A943–N971 constitute a propeptide, removed in mature form.

Belongs to the RECK family. In terms of assembly, interacts (via knot repeats) with WNT7A (via disordered linker region); the interaction is direct. Interacts (via knot repeats) with WNT7B (via disordered linker region); the interaction is direct. Interacts with ADGRA2; the interaction is direct. Interacts with MMP9. In terms of processing, N-glycosylated. In terms of tissue distribution, expressed in various tissues and untransformed cells. It is undetectable in tumor-derived cell lines and oncogenically transformed cells.

It is found in the cell membrane. Functions together with ADGRA2 to enable brain endothelial cells to selectively respond to Wnt7 signals (WNT7A or WNT7B). Plays a key role in Wnt7-specific responses: required for central nervous system (CNS) angiogenesis and blood-brain barrier regulation. Acts as a Wnt7-specific coactivator of canonical Wnt signaling by decoding Wnt ligands: acts by interacting specifically with the disordered linker region of Wnt7, thereby conferring ligand selectivity for Wnt7. ADGRA2 is then required to deliver RECK-bound Wnt7 to frizzled by assembling a higher-order RECK-ADGRA2-Fzd-LRP5-LRP6 complex. Also acts as a serine protease inhibitor: negatively regulates matrix metalloproteinase-9 (MMP9) by suppressing MMP9 secretion and by direct inhibition of its enzymatic activity. Also inhibits metalloproteinase activity of MMP2 and MMP14 (MT1-MMP). The chain is Reversion-inducing cysteine-rich protein with Kazal motifs from Homo sapiens (Human).